The chain runs to 243 residues: Adenylate dimethylallyltransferase (243 aa).

It carries out the reaction dimethylallyl diphosphate + AMP = N(6)-(dimethylallyl)adenosine 5'-phosphate + diphosphate. In terms of biological role, transfers dimethylallyl groups to AMP as part of the biosynthesis of cytokinin phytohormones. This Agrobacterium fabrum (strain C58 / ATCC 33970) (Agrobacterium tumefaciens (strain C58)) protein is Adenylate dimethylallyltransferase (tzs).